The primary structure comprises 946 residues: Atos homolog protein A (946 aa).

The transactivation domain 1 (TAD1) stretch occupies residues 24–32 (ALLITEGRT). Positions 34 to 43 (EHSVKGRTEG) are enriched in basic and acidic residues. 4 disordered regions span residues 34–58 (EHSV…APNK), 246–271 (SVTQ…FTKP), 484–524 (FQSS…TGNQ), and 547–567 (SCTD…SQKV). Polar residues-rich tracts occupy residues 247–267 (VTQP…SQHA) and 484–500 (FQSS…NENI). 2 stretches are compositionally biased toward basic and acidic residues: residues 503–517 (LPEK…HGEI) and 547–560 (SCTD…KDNP). Residues 749–806 (LLGNFEESVLNYRFEPLGVVEGFTAEVGASGIFCPTHMTLPVKVSFYSVSDDNAPSPY) form a required for macropage invasion region. Residues 833 to 841 (FNPNKTVVK) form a transactivation domain 2 (TAD2) region.

Belongs to the ATOS family.

Its subcellular location is the nucleus. In terms of biological role, transcription regulator that syncronizes transcriptional and translational programs to promote macrophage invasion of tissues. The sequence is that of Atos homolog protein A (atosa) from Xenopus tropicalis (Western clawed frog).